Consider the following 92-residue polypeptide: Small ribosomal subunit protein uS19 (92 aa).

This sequence belongs to the universal ribosomal protein uS19 family.

Functionally, protein S19 forms a complex with S13 that binds strongly to the 16S ribosomal RNA. The chain is Small ribosomal subunit protein uS19 from Bacillus cytotoxicus (strain DSM 22905 / CIP 110041 / 391-98 / NVH 391-98).